The following is a 324-amino-acid chain: NADH-ubiquinone oxidoreductase chain 1 (324 aa).

The next 9 helical transmembrane spans lie at 9–29, 43–63, 77–97, 106–126, 146–166, 177–197, 228–248, 259–279, and 299–319; these read LINP…LTLI, PNIV…KLFI, FLAT…PLPL, LGLL…LGSG, ISYE…AGGF, TIWL…STLA, LFFL…VILF, QISS…FLWI, and FLPL…ATTS.

This sequence belongs to the complex I subunit 1 family.

It is found in the mitochondrion inner membrane. It carries out the reaction a ubiquinone + NADH + 5 H(+)(in) = a ubiquinol + NAD(+) + 4 H(+)(out). Core subunit of the mitochondrial membrane respiratory chain NADH dehydrogenase (Complex I) that is believed to belong to the minimal assembly required for catalysis. Complex I functions in the transfer of electrons from NADH to the respiratory chain. The immediate electron acceptor for the enzyme is believed to be ubiquinone. The chain is NADH-ubiquinone oxidoreductase chain 1 (MT-ND1) from Scyliorhinus canicula (Small-spotted catshark).